Here is a 302-residue protein sequence, read N- to C-terminus: Homoserine O-acetyltransferase (302 aa).

Catalysis depends on C142, which acts as the Acyl-thioester intermediate. 2 residues coordinate substrate: K163 and S192. H235 serves as the catalytic Proton acceptor. E237 is an active-site residue. R249 contributes to the substrate binding site.

The protein belongs to the MetA family.

The protein resides in the cytoplasm. It carries out the reaction L-homoserine + acetyl-CoA = O-acetyl-L-homoserine + CoA. Its pathway is amino-acid biosynthesis; L-methionine biosynthesis via de novo pathway; O-acetyl-L-homoserine from L-homoserine: step 1/1. Functionally, transfers an acetyl group from acetyl-CoA to L-homoserine, forming acetyl-L-homoserine. This is Homoserine O-acetyltransferase from Bacillus pumilus (strain SAFR-032).